The following is a 394-amino-acid chain: Queuine tRNA-ribosyltransferase (394 aa).

Catalysis depends on aspartate 99, which acts as the Proton acceptor. Substrate contacts are provided by residues 99–103 (DSGGF), aspartate 153, glutamine 195, and glycine 222. The tract at residues 253–259 (GVGHPED) is RNA binding. Aspartate 272 acts as the Nucleophile in catalysis. Residues 277-281 (TRTGR) are RNA binding; important for wobble base 34 recognition. The Zn(2+) site is built by cysteine 310, cysteine 312, cysteine 315, and histidine 341.

Belongs to the queuine tRNA-ribosyltransferase family. As to quaternary structure, homodimer. Within each dimer, one monomer is responsible for RNA recognition and catalysis, while the other monomer binds to the replacement base PreQ1. It depends on Zn(2+) as a cofactor.

The enzyme catalyses 7-aminomethyl-7-carbaguanine + guanosine(34) in tRNA = 7-aminomethyl-7-carbaguanosine(34) in tRNA + guanine. Its pathway is tRNA modification; tRNA-queuosine biosynthesis. Functionally, catalyzes the base-exchange of a guanine (G) residue with the queuine precursor 7-aminomethyl-7-deazaguanine (PreQ1) at position 34 (anticodon wobble position) in tRNAs with GU(N) anticodons (tRNA-Asp, -Asn, -His and -Tyr). Catalysis occurs through a double-displacement mechanism. The nucleophile active site attacks the C1' of nucleotide 34 to detach the guanine base from the RNA, forming a covalent enzyme-RNA intermediate. The proton acceptor active site deprotonates the incoming PreQ1, allowing a nucleophilic attack on the C1' of the ribose to form the product. After dissociation, two additional enzymatic reactions on the tRNA convert PreQ1 to queuine (Q), resulting in the hypermodified nucleoside queuosine (7-(((4,5-cis-dihydroxy-2-cyclopenten-1-yl)amino)methyl)-7-deazaguanosine). The sequence is that of Queuine tRNA-ribosyltransferase from Deinococcus radiodurans (strain ATCC 13939 / DSM 20539 / JCM 16871 / CCUG 27074 / LMG 4051 / NBRC 15346 / NCIMB 9279 / VKM B-1422 / R1).